We begin with the raw amino-acid sequence, 249 residues long: DNA polymerase sliding clamp 1 (249 aa).

It belongs to the PCNA family. Homotrimer. The subunits circularize to form a toroid; DNA passes through its center. Replication factor C (RFC) is required to load the toroid on the DNA. Interacts with TIP.

With respect to regulation, inhibited by interaction with the PCNA inhibitor TIP. Its function is as follows. Sliding clamp subunit that acts as a moving platform for DNA processing. Responsible for tethering the catalytic subunit of DNA polymerase and other proteins to DNA during high-speed replication. This Thermococcus kodakarensis (strain ATCC BAA-918 / JCM 12380 / KOD1) (Pyrococcus kodakaraensis (strain KOD1)) protein is DNA polymerase sliding clamp 1.